We begin with the raw amino-acid sequence, 284 residues long: Homeobox protein SIX1 (284 aa).

A DNA-binding region (homeobox) is located at residues 124 to 183 (GEETSYCFKEKSRGVLREWYAHNPYPSPREKRELAEATGLTTTQVSNWFKNRRQRDRAAE). The tract at residues 168–269 (VSNWFKNRRQ…LQTHQHQLQD (102 aa)) is disordered. Basic and acidic residues predominate over residues 179-190 (DRAAEAKERENT). Residues 242 to 269 (RSSNYSLPGLTASQPSHGLQTHQHQLQD) show a composition bias toward polar residues.

Belongs to the SIX/Sine oculis homeobox family. Interacts with DACH1. Interacts with EYA1. Interacts with EYA2. Interacts with CDH1. Interacts with TBX18. Interacts with CEBPA. Interacts with CEBPB. Interacts with EBF2. Phosphorylated during interphase; becomes hyperphosphorylated during mitosis. Hyperphosphorylation impairs binding to promoter elements. In terms of processing, ubiquitinated by the anaphase promoting complex (APC), leading to its proteasomal degradation. In terms of tissue distribution, specifically expressed in skeletal muscle.

It localises to the nucleus. The protein localises to the cytoplasm. Its function is as follows. Transcription factor that is involved in the regulation of cell proliferation, apoptosis and embryonic development. Plays an important role in the development of several organs, including kidney, muscle and inner ear. Depending on context, functions as a transcriptional repressor or activator. Lacks an activation domain, and requires interaction with EYA family members for transcription activation. Mediates nuclear translocation of EYA1 and EYA2. Binds the 5'-TCA[AG][AG]TTNC-3' motif present in the MEF3 element in the MYOG promoter and CIDEA enhancer. Regulates the expression of numerous genes, including MYC, CCND1 and EZR. Acts as an activator of the IGFBP5 promoter, probably coactivated by EYA2. Repression of precursor cell proliferation in myoblasts is switched to activation through recruitment of EYA3 to the SIX1-DACH1 complex. During myogenesis, seems to act together with EYA2 and DACH2. Regulates the expression of CCNA1. Promotes brown adipocyte differentiation. The polypeptide is Homeobox protein SIX1 (SIX1) (Homo sapiens (Human)).